We begin with the raw amino-acid sequence, 81 residues long: Cytotoxin 2b (81 aa).

A signal peptide spans 1–21 (MKTLLLTLVVVTTVCLDLGYT). Disulfide bonds link cysteine 24-cysteine 42, cysteine 35-cysteine 59, cysteine 63-cysteine 74, and cysteine 75-cysteine 80.

The protein belongs to the three-finger toxin family. Short-chain subfamily. Type IA cytotoxin sub-subfamily. In terms of assembly, monomer in solution; Homodimer and oligomer in the presence of negatively charged lipids forming a pore with a size ranging between 20 and 30 Angstroms. Expressed by the venom gland.

Its subcellular location is the secreted. It is found in the target cell membrane. Its function is as follows. Shows cytolytic activity on many different cells by forming pore in lipid membranes. In vivo, increases heart rate or kills the animal by cardiac arrest. In addition, it binds to heparin with high affinity, interacts with Kv channel-interacting protein 1 (KCNIP1) in a calcium-independent manner, and binds to integrin alpha-V/beta-3 (ITGAV/ITGB3) with moderate affinity. The polypeptide is Cytotoxin 2b (Naja sputatrix (Malayan spitting cobra)).